Here is a 115-residue protein sequence, read N- to C-terminus: Biotrophy-associated secreted protein 1 (115 aa).

Positions 1 to 22 (MHVFNFAALFTVLATFTATAAA) are cleaved as a signal peptide. Residues 24 to 115 (DQGSNTFDQR…GIRRVENYYP (92 aa)) are disordered. Composition is skewed to basic and acidic residues over residues 46 to 55 (IREEKQENVG) and 91 to 115 (QQKE…NYYP).

Its subcellular location is the secreted. The protein resides in the host cytoplasm. In terms of biological role, secreted effector involved in biotrophic colonization of plant cells. Induces an early, basal defense response in susceptible rice, including rapid callose deposition and ROS production in leaves and calli. Also promotes sporulation and mycelia growth suggesting a role across the whole process of interaction, from the biotrophic phase to sporulation. This Pyricularia oryzae (strain 70-15 / ATCC MYA-4617 / FGSC 8958) (Rice blast fungus) protein is Biotrophy-associated secreted protein 1.